The chain runs to 92 residues: Large ribosomal subunit protein bL27 (92 aa).

The interval 1–20 (MAHKKAGGSTRNGRDSNPKY) is disordered.

It belongs to the bacterial ribosomal protein bL27 family.

This Legionella pneumophila (strain Paris) protein is Large ribosomal subunit protein bL27.